A 488-amino-acid polypeptide reads, in one-letter code: MGNMNEAIQITDAKKRYSAGVLKYAQMGYWDGDYVPKDTDILALFRITPQEGVDAIEAAAAVAGESSTATWTVVWTDRLTACDMYRAKAYKVEPVPNNPGQYFCYVAYDLSLFEEGSITNVTASIIGNVFSFKPLKAARLEDMKFPVAYVKTFPGPPTGIVVERERLDKFGRPLLGATTKPKLGLSGRNYGRVVYEGLRGGLDFMKDDENINSQPFMHWRDRFLFVMDAVNKASAATGEVKGSYLNVTAGTMEEMYRRAQFAKELGSVIVMVDLVIGYTAIQSMSNWCRQNDMILHLHRAGHGTYTRQKNHGVSFRVIAKWMRLAGVDHIHAGTAVGKLEGDPMTVQGYYNVCRDTHTKVDLPRGIYFDQDWGALRKVMPVASGGIHAGQMHQLLDLFGDDVVLQFGGGTIGHPQGIQAGATANRVALEAMVLARNEGRDIANEGPQILRDAAKWCTPLAAALDTWGEISFNYASTDTSDYVPTPSVA.

Substrate is bound by residues Asn128 and Thr178. Lys180 functions as the Proton acceptor in the catalytic mechanism. Lys182 provides a ligand contact to substrate. Mg(2+)-binding residues include Lys206, Asp208, and Glu209. An N6-carboxylysine modification is found at Lys206. His298 (proton acceptor) is an active-site residue. Positions 299, 331, and 383 each coordinate substrate.

Belongs to the RuBisCO large chain family. Type I subfamily. As to quaternary structure, heterohexadecamer of 8 large chains and 8 small chains. Mg(2+) serves as cofactor.

It catalyses the reaction 2 (2R)-3-phosphoglycerate + 2 H(+) = D-ribulose 1,5-bisphosphate + CO2 + H2O. The enzyme catalyses D-ribulose 1,5-bisphosphate + O2 = 2-phosphoglycolate + (2R)-3-phosphoglycerate + 2 H(+). Functionally, ruBisCO catalyzes two reactions: the carboxylation of D-ribulose 1,5-bisphosphate, the primary event in carbon dioxide fixation, as well as the oxidative fragmentation of the pentose substrate. Both reactions occur simultaneously and in competition at the same active site. This is Ribulose bisphosphate carboxylase large chain from Variovorax paradoxus (strain S110).